Consider the following 39-residue polypeptide: Histone H2A (39 aa).

Residues 1 to 18 (AGRGKQGGKVRAKAKTRS) show a composition bias toward basic residues. The segment at 1–24 (AGRGKQGGKVRAKAKTRSSRAGLQ) is disordered. Lys-5 carries the N6-(2-hydroxyisobutyryl)lysine modification. Residue Lys-5 is modified to N6-acetyllysine. Lys-9 carries the N6-(2-hydroxyisobutyryl)lysine; alternate modification. Lys-9 bears the N6-lactoyllysine; alternate mark. An N6-succinyllysine modification is found at Lys-9. Glycyl lysine isopeptide (Lys-Gly) (interchain with G-Cter in ubiquitin) cross-links involve residues Lys-13 and Lys-15. Position 36 is an N6-(2-hydroxyisobutyryl)lysine; alternate (Lys-36).

Belongs to the histone H2A family. In terms of assembly, the nucleosome is a histone octamer containing two molecules each of H2A, H2B, H3 and H4 assembled in one H3-H4 heterotetramer and two H2A-H2B heterodimers. The octamer wraps approximately 147 bp of DNA. Post-translationally, monoubiquitination of C-terminus gives a specific tag for epigenetic transcriptional repression. Following DNA double-strand breaks (DSBs), it is ubiquitinated through 'Lys-63' linkage of ubiquitin moieties.

The protein localises to the nucleus. It localises to the chromosome. Its function is as follows. Core component of nucleosome. Nucleosomes wrap and compact DNA into chromatin, limiting DNA accessibility to the cellular machineries which require DNA as a template. Histones thereby play a central role in transcription regulation, DNA repair, DNA replication and chromosomal stability. DNA accessibility is regulated via a complex set of post-translational modifications of histones, also called histone code, and nucleosome remodeling. In terms of biological role, buforins are strong antimicrobial activities in vitro against a broad-spectrum of microorganisms including fungi. Buforin II is more potent than buforin I. The protein is Histone H2A of Bufo gargarizans (Asian toad).